Here is a 225-residue protein sequence, read N- to C-terminus: Phosphoribosyltransferase domain-containing protein 1 (225 aa).

A2 is subject to N-acetylalanine. The Mg(2+) site is built by E141 and D142. Residues E141–T149, K173, F194–V195, and D201 each bind GMP. Mg(2+) is bound at residue D201.

It belongs to the purine/pyrimidine phosphoribosyltransferase family. As to quaternary structure, homodimer.

Has low, barely detectable phosphoribosyltransferase activity (in vitro). Binds GMP, IMP and alpha-D-5-phosphoribosyl 1-pyrophosphate (PRPP). Is not expected to contribute to purine metabolism or GMP salvage. The polypeptide is Phosphoribosyltransferase domain-containing protein 1 (PRTFDC1) (Homo sapiens (Human)).